A 347-amino-acid polypeptide reads, in one-letter code: Quinolinate synthase (347 aa).

Iminosuccinate contacts are provided by His-47 and Ser-68. Cys-113 serves as a coordination point for [4Fe-4S] cluster. Iminosuccinate-binding positions include 139–141 and Ser-156; that span reads YAN. Cys-200 lines the [4Fe-4S] cluster pocket. Iminosuccinate contacts are provided by residues 226 to 228 and Thr-243; that span reads HPE. Cys-297 is a [4Fe-4S] cluster binding site.

It belongs to the quinolinate synthase family. Type 1 subfamily. [4Fe-4S] cluster is required as a cofactor.

It localises to the cytoplasm. It carries out the reaction iminosuccinate + dihydroxyacetone phosphate = quinolinate + phosphate + 2 H2O + H(+). It participates in cofactor biosynthesis; NAD(+) biosynthesis; quinolinate from iminoaspartate: step 1/1. Catalyzes the condensation of iminoaspartate with dihydroxyacetone phosphate to form quinolinate. This is Quinolinate synthase from Salmonella heidelberg (strain SL476).